A 122-amino-acid chain; its full sequence is UPF0382 membrane protein SAUSA300_0565 (122 aa).

4 consecutive transmembrane segments (helical) span residues 3-23 (LFIILGALNAMMAVGTGAFGA), 46-66 (MYHGLALLIIGVISGTTSINV), 69-89 (AGWLIFAGIIFFSGSLYILVL), and 98-118 (ITPIGGVLFIIGWIMLIIATF).

This sequence belongs to the UPF0382 family.

It is found in the cell membrane. This is UPF0382 membrane protein SAUSA300_0565 from Staphylococcus aureus (strain USA300).